Here is a 184-residue protein sequence, read N- to C-terminus: MGLEEQLPGGILLSTVEKVAGYVRKNSLWPATFGLACCAIEMMATAGPRFDIARFGMERFSATPRQADLMIVAGRVSQKMAPVLRQIYDQMAEPKWVLAMGVCASSGGMFNNYAIVQGVDHVVPVDIYLPGCPPRPEMLLYAILKLHEKIQQMPLGVNRETAIAEAEQAALSARPTIEMRGLLR.

Positions 37, 38, 103, and 132 each coordinate [4Fe-4S] cluster.

The protein belongs to the complex I 20 kDa subunit family. As to quaternary structure, NDH-1 is composed of 14 different subunits. Subunits NuoB, C, D, E, F, and G constitute the peripheral sector of the complex. The cofactor is [4Fe-4S] cluster.

It localises to the cell membrane. It carries out the reaction a quinone + NADH + 5 H(+)(in) = a quinol + NAD(+) + 4 H(+)(out). Its function is as follows. NDH-1 shuttles electrons from NADH, via FMN and iron-sulfur (Fe-S) centers, to quinones in the respiratory chain. The immediate electron acceptor for the enzyme in this species is believed to be a menaquinone. Couples the redox reaction to proton translocation (for every two electrons transferred, four hydrogen ions are translocated across the cytoplasmic membrane), and thus conserves the redox energy in a proton gradient. This Mycolicibacterium paratuberculosis (strain ATCC BAA-968 / K-10) (Mycobacterium paratuberculosis) protein is NADH-quinone oxidoreductase subunit B.